Reading from the N-terminus, the 135-residue chain is Small ribosomal subunit protein uS9 (135 aa).

Over residues 108-118 (VGDSRRTEPHK) the composition is skewed to basic and acidic residues. The disordered stretch occupies residues 108-135 (VGDSRRTEPHKPNRSTKGPRAKRQKSYR). Residues 119 to 135 (PNRSTKGPRAKRQKSYR) are compositionally biased toward basic residues.

It belongs to the universal ribosomal protein uS9 family. Part of the 30S ribosomal subunit.

In Thermococcus kodakarensis (strain ATCC BAA-918 / JCM 12380 / KOD1) (Pyrococcus kodakaraensis (strain KOD1)), this protein is Small ribosomal subunit protein uS9.